The following is a 620-amino-acid chain: Membralin (620 aa).

A disordered region spans residues 1–33; it reads MSEHVEPAAPGPGPNGGGGGPAPARGPRTPNLN. Residue S2 is modified to N-acetylserine. Residues 22-31 show a composition bias toward low complexity; it reads APARGPRTPN. T29 bears the Phosphothreonine mark. Residues 70-90 traverse the membrane as a helical segment; the sequence is FFVLLKALFVLFVLAYIHIVF. N-linked (GlcNAc...) asparagine glycosylation is present at N189. 3 helical membrane-spanning segments follow: residues 302–322, 346–366, and 426–446; these read TSYL…SMLL, IAFP…MEAI, and YSSL…IYFF. Disordered regions lie at residues 474 to 517 and 568 to 620; these read TPTA…GPVA and SPLG…EVGS. 2 stretches are compositionally biased toward low complexity: residues 499-517 and 568-593; these read PPAL…GPVA and SPLG…AASD.

This sequence belongs to the membralin family. Interacts with ERLIN2.

Its subcellular location is the endoplasmic reticulum membrane. Functionally, may have a role in the ERAD pathway required for clearance of misfolded proteins in the endoplasmic reticulum (ER). Promotes survival of motor neurons, probably by protecting against ER stress. The protein is Membralin (TMEM259) of Homo sapiens (Human).